Consider the following 384-residue polypeptide: Omega-6 fatty acid desaturase, endoplasmic reticulum (384 aa).

The interval Met-1 to Arg-23 is disordered. Positions Lys-14–Arg-23 are enriched in basic and acidic residues. Helical transmembrane passes span Leu-56–Leu-76 and Val-84–Ala-104. The Histidine box-1 signature appears at His-105–His-109. The chain crosses the membrane as a helical span at residues Trp-117–Trp-137. A Histidine box-2 motif is present at residues His-141–His-145. 3 helical membrane-spanning segments follow: residues Val-180–Gly-200, Ile-226–Ala-246, and Val-253–Leu-273. A Histidine box-3 motif is present at residues His-316–His-320.

This sequence belongs to the fatty acid desaturase type 1 family.

It is found in the endoplasmic reticulum membrane. The protein operates within lipid metabolism; polyunsaturated fatty acid biosynthesis. Functionally, ER (microsomal) omega-6 fatty acid desaturase introduces the second double bond in the biosynthesis of 18:3 fatty acids, important constituents of plant membranes. It is thought to use cytochrome b5 as an electron donor and to act on fatty acids esterified to phosphatidylcholine and, possibly, other phospholipids. This chain is Omega-6 fatty acid desaturase, endoplasmic reticulum, found in Brassica juncea (Indian mustard).